A 504-amino-acid chain; its full sequence is Glycerol kinase (504 aa).

Thr-14 contributes to the ADP binding site. Thr-14, Thr-15, and Ser-16 together coordinate ATP. Thr-14 contacts sn-glycerol 3-phosphate. Arg-18 is a binding site for ADP. Residues Arg-84, Glu-85, Tyr-136, and Asp-246 each coordinate sn-glycerol 3-phosphate. The glycerol site is built by Arg-84, Glu-85, Tyr-136, Asp-246, and Gln-247. Thr-268 and Gly-311 together coordinate ADP. Thr-268, Gly-311, Gln-315, and Gly-412 together coordinate ATP. Residues Gly-412 and Asn-416 each coordinate ADP.

This sequence belongs to the FGGY kinase family.

The enzyme catalyses glycerol + ATP = sn-glycerol 3-phosphate + ADP + H(+). It participates in polyol metabolism; glycerol degradation via glycerol kinase pathway; sn-glycerol 3-phosphate from glycerol: step 1/1. With respect to regulation, inhibited by fructose 1,6-bisphosphate (FBP). In terms of biological role, key enzyme in the regulation of glycerol uptake and metabolism. Catalyzes the phosphorylation of glycerol to yield sn-glycerol 3-phosphate. In Aliivibrio fischeri (strain MJ11) (Vibrio fischeri), this protein is Glycerol kinase.